The primary structure comprises 1101 residues: MEDRQNDQNDDVFSFFSPSFSAATPSTLFNRSAYSSSSSSGDDESQPSVDDSNKRIDYMIQFLDRRLSEDGNHDGIGDGNGSDSLPEFVGKCGESGIFKVPIRSAVHPNRPPSLDVRPHPLRETQIGRFLRTMTSTERQLWTGGEDGALRVWEFSELYGSGRGLEVEDTAPYKESLGNEFGSAAVVCMIGDEGSRVVWSGHRDGRIRCWRLRGDHGIEEALSWQAHRGPVLSIAISAYGDIWSGSEGGALKVWPWDGALGKSLSLKMEERHMAALAVERSYIDPRNMVSANGFANTLTSDVTFLVSDHTRARVWSASPLTFAIWDARTRDLIKVFNIDGQLENRPENSVYPDFGSEEEGKMKVTASKKEKAQSSLGFFQRSRNAIMGAADAVRRAATKGGFCDDSRKTEAIVISVDGMIWTGSSNGILMRWDGNGNCLQEFAYESSGILCMFTFCSRLWVGYSNGTVQVWDLEGKLLGGWVAHSGPVIKMAIGAGYLFTLANHGGIRGWNVTSPGPLDNVLRAELAGKEFLYSRIENLKILAGTWNVGEGRASTDSLVSWLGCAATGVEIVVVGLQEVEMGAGVLAMSAAKETVGLEGSPLGQWWLDMIGKTLDEGSSFVRVGSRQLAGLLICVWVRHDLKPHVGDVDAAAVPCGFGRAIGNKGAVGVRLRMYDRVLCFVNCHFAAHLEAVNRRNADFDHVYRTMTFSRQSSSLNAGVAGASFGVTMPRGGNALGVNTIEARPELSEADMVIFLGDFNYRLDDITYDETRDFISQRCFDWLREKDQLHTEMEAGNVFQGMREAIIRFPPTYKFERHQAGLAGYDSGEKKRIPAWCDRILYRDNKKHLGAECSLDCPVVSSISQYDACMEVTDSDHKPVRCVFSVKIARVDESVRRQEYGNIINSNKKIKVLLGELSKVPETIVSTNNIILQNQDSTILRITNKSEKNIAFFKIICEGQSKIEEDGQAHDHRARGSFGFPQWLEVSPGTGTIKPNQIAEVSVHLEDFPTVEEFVDGVAQNSWCEDTRDKEVILVLVVHGRFSTETRKHRIRVRHCPRGGPAKNHFNDGTKTSGQINALHRSDYHQLSNTLDVVEQLKNLHSP.

The span at 31-40 shows a compositional bias: low complexity; it reads RSAYSSSSSS. The disordered stretch occupies residues 31–54; it reads RSAYSSSSSSGDDESQPSVDDSNK. WD repeat units lie at residues 121–162, 180–219, 225–263, 403–432, 433–481, and 483–519; these read LRET…GSGR, FGSA…GIEE, AHRG…GKSL, DDSR…MRWD, GNGN…GGWV, and HSGP…PLDN. Catalytic regions lie at residues 749 to 765 and 828 to 843; these read DMVI…DDIT and KKRI…YRDN. Lysine 907 is covalently cross-linked (Glycyl lysine isopeptide (Lys-Gly) (interchain with G-Cter in ubiquitin)).

This sequence belongs to the inositol polyphosphate 5-phosphatase family. Mg(2+) serves as cofactor. As to expression, predominantly expressed in interfascicular fibers and vascular bundles. Expressed in seedlings, stems, roots and flowers. Expressed at lower level in mature leaves.

It carries out the reaction a 1,2-diacyl-sn-glycero-3-phospho-(1D-myo-inositol-4,5-bisphosphate) + H2O = a 1,2-diacyl-sn-glycero-3-phospho-(1D-myo-inositol 4-phosphate) + phosphate. It catalyses the reaction a 1,2-diacyl-sn-glycero-3-phospho-(1D-myo-inositol-3,4,5-trisphosphate) + H2O = a 1,2-diacyl-sn-glycero-3-phospho-(1D-myo-inositol-3,4-bisphosphate) + phosphate. The catalysed reaction is 1D-myo-inositol 1,4,5-trisphosphate + H2O = 1D-myo-inositol 1,4-bisphosphate + phosphate. Has phosphatase activity toward PtdIns(4,5)P2, PtdIns(3,4,5)P3 and Ins(1,4,5)P3. Has a higher substrate affinity toward PtdIns(4,5)P2. Required for secondary wall synthesis and actin organization in fiber cells. In Arabidopsis thaliana (Mouse-ear cress), this protein is Type II inositol polyphosphate 5-phosphatase 15.